Here is a 181-residue protein sequence, read N- to C-terminus: Ribulose bisphosphate carboxylase small subunit, chloroplastic 1 (181 aa).

The N-terminal 54 residues, 1–54 (MASSMLSSAAVVTSPAQATMVAPFTGLKSSSAFPVTRKANNDITSIVSNGGRVS), are a transit peptide targeting the chloroplast.

The protein belongs to the RuBisCO small chain family. In terms of assembly, heterohexadecamer of 8 large and 8 small subunits.

Its subcellular location is the plastid. It localises to the chloroplast. Functionally, ruBisCO catalyzes two reactions: the carboxylation of D-ribulose 1,5-bisphosphate, the primary event in carbon dioxide fixation, as well as the oxidative fragmentation of the pentose substrate. Both reactions occur simultaneously and in competition at the same active site. Although the small subunit is not catalytic it is essential for maximal activity. This is Ribulose bisphosphate carboxylase small subunit, chloroplastic 1 from Brassica napus (Rape).